The chain runs to 301 residues: Probable alpha-L-glutamate ligase (301 aa).

In terms of domain architecture, ATP-grasp spans 104–287; the sequence is LQLLSRRGIG…VAGIIIEHLE (184 aa). Residues lysine 141, 178–179, aspartate 187, and 211–213 contribute to the ATP site; these read EY and RSN. Mg(2+)-binding residues include aspartate 248, glutamate 260, and asparagine 262. Residues aspartate 248, glutamate 260, and asparagine 262 each contribute to the Mn(2+) site.

This sequence belongs to the RimK family. It depends on Mg(2+) as a cofactor. Requires Mn(2+) as cofactor.

This is Probable alpha-L-glutamate ligase from Pseudomonas fluorescens (strain Pf0-1).